Reading from the N-terminus, the 91-residue chain is Large ribosomal subunit protein uL29 (91 aa).

The tract at residues 67-91 (AAPLAESSAPAKTKSRARKSKKEAL) is disordered. Residues 79-91 (TKSRARKSKKEAL) show a composition bias toward basic residues.

Belongs to the universal ribosomal protein uL29 family.

The sequence is that of Large ribosomal subunit protein uL29 from Acidobacterium capsulatum (strain ATCC 51196 / DSM 11244 / BCRC 80197 / JCM 7670 / NBRC 15755 / NCIMB 13165 / 161).